We begin with the raw amino-acid sequence, 224 residues long: UPF0758 protein PST_0473 (224 aa).

The region spanning 102-224 (ALESPQAVRD…PLSMAEYGWM (123 aa)) is the MPN domain. Zn(2+) is bound by residues H173, H175, and D186. The JAMM motif signature appears at 173-186 (HNHPSGVAEPSQAD).

This sequence belongs to the UPF0758 family.

The protein is UPF0758 protein PST_0473 of Stutzerimonas stutzeri (strain A1501) (Pseudomonas stutzeri).